The sequence spans 445 residues: 3-phosphoshikimate 1-carboxyvinyltransferase (445 aa).

3-phosphoshikimate is bound by residues K21, S22, and R26. K21 contacts phosphoenolpyruvate. Positions 92 and 120 each coordinate phosphoenolpyruvate. Residues S165, Q166, D307, and K334 each coordinate 3-phosphoshikimate. Q166 contributes to the phosphoenolpyruvate binding site. The active-site Proton acceptor is the D307. Phosphoenolpyruvate contacts are provided by R338, R379, and K405.

This sequence belongs to the EPSP synthase family. In terms of assembly, monomer.

It is found in the cytoplasm. The catalysed reaction is 3-phosphoshikimate + phosphoenolpyruvate = 5-O-(1-carboxyvinyl)-3-phosphoshikimate + phosphate. The protein operates within metabolic intermediate biosynthesis; chorismate biosynthesis; chorismate from D-erythrose 4-phosphate and phosphoenolpyruvate: step 6/7. Functionally, catalyzes the transfer of the enolpyruvyl moiety of phosphoenolpyruvate (PEP) to the 5-hydroxyl of shikimate-3-phosphate (S3P) to produce enolpyruvyl shikimate-3-phosphate and inorganic phosphate. The polypeptide is 3-phosphoshikimate 1-carboxyvinyltransferase (Chlamydia abortus (strain DSM 27085 / S26/3) (Chlamydophila abortus)).